An 86-amino-acid chain; its full sequence is HssA/B-like protein 60 (86 aa).

The interval 11-33 (GNIKSSSKSNIASSSSSSSSQSL) is disordered.

Belongs to the hssA/B family.

The protein is HssA/B-like protein 60 (hssl60) of Dictyostelium discoideum (Social amoeba).